The sequence spans 378 residues: Queuine tRNA-ribosyltransferase (378 aa).

Catalysis depends on Asp-93, which acts as the Proton acceptor. Substrate is bound by residues 93–97 (DSGGF), Asp-147, Gln-189, and Gly-216. The segment at 247-253 (GVGTFRE) is RNA binding. The active-site Nucleophile is the Asp-266. An RNA binding; important for wobble base 34 recognition region spans residues 271–275 (TRVAR). Cys-308, Cys-310, Cys-313, and His-339 together coordinate Zn(2+).

This sequence belongs to the queuine tRNA-ribosyltransferase family. In terms of assembly, homodimer. Within each dimer, one monomer is responsible for RNA recognition and catalysis, while the other monomer binds to the replacement base PreQ1. Zn(2+) serves as cofactor.

The enzyme catalyses 7-aminomethyl-7-carbaguanine + guanosine(34) in tRNA = 7-aminomethyl-7-carbaguanosine(34) in tRNA + guanine. It participates in tRNA modification; tRNA-queuosine biosynthesis. In terms of biological role, catalyzes the base-exchange of a guanine (G) residue with the queuine precursor 7-aminomethyl-7-deazaguanine (PreQ1) at position 34 (anticodon wobble position) in tRNAs with GU(N) anticodons (tRNA-Asp, -Asn, -His and -Tyr). Catalysis occurs through a double-displacement mechanism. The nucleophile active site attacks the C1' of nucleotide 34 to detach the guanine base from the RNA, forming a covalent enzyme-RNA intermediate. The proton acceptor active site deprotonates the incoming PreQ1, allowing a nucleophilic attack on the C1' of the ribose to form the product. After dissociation, two additional enzymatic reactions on the tRNA convert PreQ1 to queuine (Q), resulting in the hypermodified nucleoside queuosine (7-(((4,5-cis-dihydroxy-2-cyclopenten-1-yl)amino)methyl)-7-deazaguanosine). This chain is Queuine tRNA-ribosyltransferase, found in Gloeobacter violaceus (strain ATCC 29082 / PCC 7421).